Consider the following 84-residue polypeptide: CDC42 small effector protein 2-A (84 aa).

2 S-palmitoyl cysteine lipidation sites follow: Cys-10 and Cys-11. The 14-residue stretch at 29–42 (IGEPTNFVHTAHVG) folds into the CRIB domain.

This sequence belongs to the CDC42SE/SPEC family.

Its subcellular location is the cytoplasm. The protein resides in the cytoskeleton. The protein localises to the cell membrane. In terms of biological role, probably involved in the organization of the actin cytoskeleton by acting downstream of CDC42, inducing actin filament assembly. The chain is CDC42 small effector protein 2-A (cdc42se2-a) from Xenopus laevis (African clawed frog).